Consider the following 415-residue polypeptide: Phakinin (415 aa).

The segment at 1 to 26 (MSTRRVVVDAPAGASSSMPLQRHKAS) is disordered. Ser-2 carries the N-acetylserine modification. A head region spans residues 2-114 (STRRVVVDAP…LGAVEDLGGC (113 aa)). Phosphoserine occurs at positions 26, 32, and 35. Thr-53 bears the Phosphothreonine mark. 2 positions are modified to phosphoserine: Ser-90 and Ser-100. Residues 104–415 (DLGAVEDLGG…HALLDREESS (312 aa)) form the IF rod domain. Coiled-coil stretches lie at residues 115–144 (LVEY…ESKA), 199–248 (RKAA…VKML), and 295–395 (QAKQ…LSHK). A tail region spans residues 396-415 (CQLQRDVASYHALLDREESS).

The protein belongs to the intermediate filament family. Part of a complex required for lens intermediate filament formation composed of BFSP1, BFSP2 and CRYAA. Found in a complex composed of PPL (via C-terminal linker domain), BFSP1 and BFSP2 in the retinal lens. Within the complex interacts with PPL (via C-terminal linker domain) and with BFSP1. Identified in a complex that contains VIM, EZR, AHNAK, BFSP1, BFSP2, ANK2, PLEC, PRX and spectrin. Interacts with LGSN. Interacts with VIM. Abundantly expressed in both the inner and outer cortex of the retina, expressed at a lower level in the nucleus of the retina (at protein level). Detected in eye lens fiber cells (at protein level).

It localises to the cell membrane. The protein localises to the cytoplasm. Its subcellular location is the cytoskeleton. The protein resides in the cell cortex. Required for the correct formation of lens intermediate filaments as part of a complex composed of BFSP1, BFSP2 and CRYAA. Plays a role in maintenance of retinal lens optical clarity. The polypeptide is Phakinin (BFSP2) (Bos taurus (Bovine)).